A 293-amino-acid chain; its full sequence is Undecaprenyl-diphosphatase (293 aa).

8 helical membrane-spanning segments follow: residues 3-23 (IALA…EFLP), 43-63 (KGKI…CWEF), 85-105 (VNVI…GKWI), 109-129 (LFNP…ILLA), 178-198 (FALV…MLFG), 203-223 (VATE…TVYE), 238-258 (IFAV…RWLL), and 269-289 (FAWY…TGVI).

Belongs to the UppP family.

It is found in the cell inner membrane. The enzyme catalyses di-trans,octa-cis-undecaprenyl diphosphate + H2O = di-trans,octa-cis-undecaprenyl phosphate + phosphate + H(+). Catalyzes the dephosphorylation of undecaprenyl diphosphate (UPP). Confers resistance to bacitracin. This is Undecaprenyl-diphosphatase from Cupriavidus metallidurans (strain ATCC 43123 / DSM 2839 / NBRC 102507 / CH34) (Ralstonia metallidurans).